A 650-amino-acid polypeptide reads, in one-letter code: Protein ANTI-SILENCING 1 (650 aa).

A BAH domain is found at 38–169; that stretch reads DEYRLYDCVL…VGSCKVVDTI (132 aa). Disordered stretches follow at residues 202 to 223, 229 to 248, 257 to 359, and 425 to 448; these read NGKSDSLKPNGPLARGASGSVR, AFESSDCKENSNGCKEEKEK, KSTL…QKLD, and VTEKGISKKPSFGRAEDKMSADDN. Composition is skewed to basic and acidic residues over residues 259–270 and 277–287; these read TLAEERSNKDSG and NGKDQESEVKK. The segment covering 302–315 has biased composition (polar residues); sequence SNSFEASGSRTIHS. 2 stretches are compositionally biased toward basic and acidic residues: residues 348–358 and 438–448; these read LDDRPLKKQKL and RAEDKMSADDN. Residues 486–569 enclose the RRM domain; that stretch reads TVVLLQNLDP…RPLVASFAKI (84 aa).

In terms of assembly, component of the ASI1-AIPP1-EDM2 (AAE) RNA regulatory complex composed of at least AIPP1/EDM3, ASI1 and EDM2 and may contain CPL2, AIPP2 and AIPP3/BDT1. Binds directly to AIPP1/EDM3 and AIPP2.

Collaboratively with AIPP1/EDM3 and EDM2, the AAE complex regulates alternative RNA processing (e.g. alternative splicing) and epigenetic silencing (e.g. H3K9me2) of intronic heterochromatin-containing genes as well as genic heterochromatin-containing genes by promoting distal 3' polyadenylation; may associate with intronic heterochromatin and bind gene transcripts to modulate polyadenylation. Required to prevent promoter DNA hypermethylation and transcriptional silencing of some transgenes. Plays a similar role to that of the histone H3K9 demethylase JMJ25/IBM1 in preventing CHG methylation in the bodies of numerous genes. RNA-binding protein that ensures the proper expression of JMJ25/IBM1 full-length transcript by associating with an intronic heterochromatic repeat element of JMJ25/IBM1. Also modulates transposable elements (TE) expression. Contributes to a unique mechanism to deal with the collateral effect of silencing intronic repeat elements. The protein is Protein ANTI-SILENCING 1 of Arabidopsis thaliana (Mouse-ear cress).